Consider the following 553-residue polypeptide: Phospholipase B (553 aa).

A signal peptide spans 1 to 35 (MIRFGNPSSSDKRRQRCRSWYWGGLLLLWAVAETR). N313, N416, and N531 each carry an N-linked (GlcNAc...) asparagine glycan.

This sequence belongs to the phospholipase B-like family. Expressed by the venom gland.

It is found in the secreted. In terms of biological role, may cause hemolysis or may be involved in protein folding and translation. The sequence is that of Phospholipase B from Crotalus adamanteus (Eastern diamondback rattlesnake).